The sequence spans 420 residues: Light-independent protochlorophyllide reductase subunit N (420 aa).

Residues Cys-21, Cys-46, and Cys-103 each contribute to the [4Fe-4S] cluster site.

Belongs to the BchN/ChlN family. In terms of assembly, protochlorophyllide reductase is composed of three subunits; BchL, BchN and BchB. Forms a heterotetramer of two BchB and two BchN subunits. The cofactor is [4Fe-4S] cluster.

The catalysed reaction is chlorophyllide a + oxidized 2[4Fe-4S]-[ferredoxin] + 2 ADP + 2 phosphate = protochlorophyllide a + reduced 2[4Fe-4S]-[ferredoxin] + 2 ATP + 2 H2O. It participates in porphyrin-containing compound metabolism; bacteriochlorophyll biosynthesis (light-independent). Its function is as follows. Component of the dark-operative protochlorophyllide reductase (DPOR) that uses Mg-ATP and reduced ferredoxin to reduce ring D of protochlorophyllide (Pchlide) to form chlorophyllide a (Chlide). This reaction is light-independent. The NB-protein (BchN-BchB) is the catalytic component of the complex. This is Light-independent protochlorophyllide reductase subunit N from Chlorobium phaeobacteroides (strain DSM 266 / SMG 266 / 2430).